Reading from the N-terminus, the 562-residue chain is Arginine--tRNA ligase (562 aa).

Positions 126-136 match the 'HIGH' region motif; that stretch reads ANPTGPLNVGH.

Belongs to the class-I aminoacyl-tRNA synthetase family. As to quaternary structure, monomer.

Its subcellular location is the cytoplasm. It catalyses the reaction tRNA(Arg) + L-arginine + ATP = L-arginyl-tRNA(Arg) + AMP + diphosphate. This is Arginine--tRNA ligase from Salinibacter ruber (strain DSM 13855 / M31).